The primary structure comprises 143 residues: Transcription antitermination protein NusB (143 aa).

It belongs to the NusB family.

Its function is as follows. Involved in transcription antitermination. Required for transcription of ribosomal RNA (rRNA) genes. Binds specifically to the boxA antiterminator sequence of the ribosomal RNA (rrn) operons. This Clostridium botulinum (strain Kyoto / Type A2) protein is Transcription antitermination protein NusB.